The sequence spans 506 residues: 2-isopropylmalate synthase (506 aa).

One can recognise a Pyruvate carboxyltransferase domain in the interval 4–266 (ILFMDTTLRD…QSSIILKEIK (263 aa)). Residues D13, H201, H203, and N237 each contribute to the Mn(2+) site. The regulatory domain stretch occupies residues 390–506 (NIKQLQVHFV…KLKALLTLVK (117 aa)).

It belongs to the alpha-IPM synthase/homocitrate synthase family. LeuA type 1 subfamily. Homodimer. Mn(2+) is required as a cofactor.

Its subcellular location is the cytoplasm. It carries out the reaction 3-methyl-2-oxobutanoate + acetyl-CoA + H2O = (2S)-2-isopropylmalate + CoA + H(+). The protein operates within amino-acid biosynthesis; L-leucine biosynthesis; L-leucine from 3-methyl-2-oxobutanoate: step 1/4. Catalyzes the condensation of the acetyl group of acetyl-CoA with 3-methyl-2-oxobutanoate (2-ketoisovalerate) to form 3-carboxy-3-hydroxy-4-methylpentanoate (2-isopropylmalate). This chain is 2-isopropylmalate synthase, found in Bacillus cytotoxicus (strain DSM 22905 / CIP 110041 / 391-98 / NVH 391-98).